Here is a 449-residue protein sequence, read N- to C-terminus: Tripartite motif-containing protein 64B (449 aa).

The segment at 15 to 56 (CCICVNYFIDPVTIDCGHSFCRPCLCLCSEEGRAPMRCPSCR) adopts an RING-type zinc-finger fold. The segment at 87–128 (SSDNICVLHEETKELFCEADKRLLCGPCSESPEHMAHSHSPI) adopts a B box-type zinc-finger fold. Residues Cys92, His95, Cys114, and His120 each contribute to the Zn(2+) site. Residues 189 to 225 (LDEEEQRHLQALEREAEELFQQLQDSQVRMTQHLERM) are a coiled coil. The 182-residue stretch at 268-449 (ELTSWCITGV…LRPFFCFGCT (182 aa)) folds into the B30.2/SPRY domain.

This sequence belongs to the TRIM/RBCC family.

The protein is Tripartite motif-containing protein 64B (TRIM64B) of Homo sapiens (Human).